Consider the following 371-residue polypeptide: NADP-dependent oxidoreductase lnaE (371 aa).

NADP(+)-binding positions include Asp-172 to Gly-175, Lys-198, Tyr-214, Asn-237, Tyr-277 to Gln-283, and Phe-307 to Leu-309.

Belongs to the NADP-dependent oxidoreductase L4BD family.

It functions in the pathway secondary metabolite biosynthesis. NADP-dependent oxidoreductase; part of the lna gene cluster that mediates the biosynthesis of diastereomeric piperazines. Lna and lnb clusters encode sets of enzymes that produce overlapping sets of previously undescribed metabolites such as piperazinomycin-like metabolites or morpholine. The lna and lnb biosynthetic pathways appear to be part of a signaling network that controls the formation of sclerotia, a resilient overwintering structure. One primary function of the non-canonical nonribosomal peptide synthetases lnaA and lnbA consists in the reduction of L-tyrosine. The presence in the clusters of tailoring enzymes such as the oxidoreductases lnaB, lnbB, lnaE or lnbE, as well as of the cytochrome P450 monooxygenases lnaC, lnaD, or lnbC, might explain formation of various diastereomeric piperazines. This chain is NADP-dependent oxidoreductase lnaE, found in Aspergillus flavus (strain ATCC 200026 / FGSC A1120 / IAM 13836 / NRRL 3357 / JCM 12722 / SRRC 167).